A 173-amino-acid polypeptide reads, in one-letter code: T cell receptor gamma constant 1 (173 aa).

One can recognise an Ig-like domain in the interval 10–104 (PKPTIFLPSI…NKNGVDQEII (95 aa)). C32 and C88 are disulfide-bonded. 4 N-linked (GlcNAc...) asparagine glycosylation sites follow: N66, N120, N126, and N135. A helical membrane pass occupies residues 139-161 (YYMYLLLLLKSVVYFAIITCCLL).

As to quaternary structure, gamma-delta TR is a heterodimer composed of a gamma and delta chain; disulfide-linked. The gamma-delta TR is associated with the transmembrane signaling CD3 coreceptor proteins following the stoichiometry: a single gamma-delta TR heterodimer associates with one CD3D-CD3E heterodimer, one CD3G-CD3E heterodimer and one CD247 homodimer forming a stable octameric structure. Upon activation, gamma-delta TR complex associates with FCER1G to initiate intracellular signaling.

It is found in the cell membrane. Functionally, constant region of T cell receptor (TR) gamma chain that participates in the antigen recognition. Gamma-delta TRs recognize a variety of self and foreign non-peptide antigens frequently expressed at the epithelial boundaries between the host and external environment, including endogenous lipids presented by MH-like protein CD1D and phosphoantigens presented by butyrophilin-like molecule BTN3A1. Upon antigen recognition induces rapid, innate-like immune responses involved in pathogen clearance and tissue repair. Binding of gamma-delta TR complex to antigen triggers phosphorylation of immunoreceptor tyrosine-based activation motifs (ITAMs) in the CD3 chains by the LCK and FYN kinases, allowing the recruitment, phosphorylation, and activation of ZAP70 that facilitates phosphorylation of the scaffolding proteins LCP2 and LAT. This lead to the formation of a supramolecular signalosome that recruits the phospholipase PLCG1, resulting in calcium mobilization and ERK activation, ultimately leading to T cell expansion and differentiation into effector cells. Gamma-delta TRs are produced through somatic rearrangement of a limited repertoire of variable (V), diversity (D), and joining (J) genes. The potential diversity of gamma-delta TRs is conferred by the unique ability to rearrange (D) genes in tandem and to utilize all three reading frames. The combinatorial diversity is considerably increased by the sequence exonuclease trimming and random nucleotide (N) region additions which occur during the V-(D)-J rearrangements. The chain is T cell receptor gamma constant 1 from Homo sapiens (Human).